The sequence spans 272 residues: 3-methyl-2-oxobutanoate hydroxymethyltransferase (272 aa).

Residues Asp42 and Asp86 each contribute to the Mg(2+) site. 3-methyl-2-oxobutanoate-binding positions include 42–43 (DS), Asp86, and Lys116. Residue Glu118 coordinates Mg(2+). Catalysis depends on Glu185, which acts as the Proton acceptor.

The protein belongs to the PanB family. As to quaternary structure, homodecamer; pentamer of dimers. Mg(2+) serves as cofactor.

It localises to the cytoplasm. The catalysed reaction is 3-methyl-2-oxobutanoate + (6R)-5,10-methylene-5,6,7,8-tetrahydrofolate + H2O = 2-dehydropantoate + (6S)-5,6,7,8-tetrahydrofolate. It participates in cofactor biosynthesis; (R)-pantothenate biosynthesis; (R)-pantoate from 3-methyl-2-oxobutanoate: step 1/2. Its function is as follows. Catalyzes the reversible reaction in which hydroxymethyl group from 5,10-methylenetetrahydrofolate is transferred onto alpha-ketoisovalerate to form ketopantoate. The polypeptide is 3-methyl-2-oxobutanoate hydroxymethyltransferase (Prochlorococcus marinus (strain MIT 9303)).